The chain runs to 263 residues: Pyridoxine 5'-phosphate synthase (263 aa).

3-amino-2-oxopropyl phosphate is bound at residue asparagine 15. 17-18 contacts 1-deoxy-D-xylulose 5-phosphate; that stretch reads DH. Arginine 26 serves as a coordination point for 3-amino-2-oxopropyl phosphate. Histidine 51 (proton acceptor) is an active-site residue. Residues arginine 53 and histidine 58 each contribute to the 1-deoxy-D-xylulose 5-phosphate site. Glutamate 78 acts as the Proton acceptor in catalysis. Threonine 108 serves as a coordination point for 1-deoxy-D-xylulose 5-phosphate. Histidine 199 functions as the Proton donor in the catalytic mechanism. 3-amino-2-oxopropyl phosphate contacts are provided by residues glycine 200 and 221-222; that span reads GH.

It belongs to the PNP synthase family. Homooctamer; tetramer of dimers.

It is found in the cytoplasm. It carries out the reaction 3-amino-2-oxopropyl phosphate + 1-deoxy-D-xylulose 5-phosphate = pyridoxine 5'-phosphate + phosphate + 2 H2O + H(+). It participates in cofactor biosynthesis; pyridoxine 5'-phosphate biosynthesis; pyridoxine 5'-phosphate from D-erythrose 4-phosphate: step 5/5. Catalyzes the complicated ring closure reaction between the two acyclic compounds 1-deoxy-D-xylulose-5-phosphate (DXP) and 3-amino-2-oxopropyl phosphate (1-amino-acetone-3-phosphate or AAP) to form pyridoxine 5'-phosphate (PNP) and inorganic phosphate. This chain is Pyridoxine 5'-phosphate synthase, found in Ralstonia nicotianae (strain ATCC BAA-1114 / GMI1000) (Ralstonia solanacearum).